The primary structure comprises 503 residues: Apolipoprotein N-acyltransferase (503 aa).

7 helical membrane passes run 13-32, 34-54, 63-83, 102-122, 124-144, 173-193, and 203-223; these read RWRGLVSLFLSVLSGFLTAL, MPGFLSGALIWFSLIPLLYAV, AFLSFVYFFTHVLISFFWVLP, IVVFVLMGIIEAVPFLGFGFL, YFAPQSIVLKTLYLASVYTIF, IVSITGTLGLVFLIVSLNVLF, and LLIFPVIFFVYLLNSSVVHLL. The region spanning 231-460 is the CN hydrolase domain; it reads FKVVALQPNV…RLAGEFHIKA (230 aa). The active-site Proton acceptor is the E273. K321 is an active-site residue. Catalysis depends on C371, which acts as the Nucleophile. Residues 468-488 form a helical membrane-spanning segment; that stretch reads VRYGDWFFYLSVILAVVSVFI.

It belongs to the CN hydrolase family. Apolipoprotein N-acyltransferase subfamily.

It localises to the cell inner membrane. It carries out the reaction N-terminal S-1,2-diacyl-sn-glyceryl-L-cysteinyl-[lipoprotein] + a glycerophospholipid = N-acyl-S-1,2-diacyl-sn-glyceryl-L-cysteinyl-[lipoprotein] + a 2-acyl-sn-glycero-3-phospholipid + H(+). It participates in protein modification; lipoprotein biosynthesis (N-acyl transfer). Its function is as follows. Catalyzes the phospholipid dependent N-acylation of the N-terminal cysteine of apolipoprotein, the last step in lipoprotein maturation. This is Apolipoprotein N-acyltransferase from Thermotoga maritima (strain ATCC 43589 / DSM 3109 / JCM 10099 / NBRC 100826 / MSB8).